A 436-amino-acid polypeptide reads, in one-letter code: Trigger factor (436 aa).

One can recognise a PPIase FKBP-type domain in the interval 161-255 (DDVAIIDFKT…VKEVREKQLP (95 aa)).

It belongs to the FKBP-type PPIase family. Tig subfamily.

It is found in the cytoplasm. It catalyses the reaction [protein]-peptidylproline (omega=180) = [protein]-peptidylproline (omega=0). In terms of biological role, involved in protein export. Acts as a chaperone by maintaining the newly synthesized protein in an open conformation. Functions as a peptidyl-prolyl cis-trans isomerase. The protein is Trigger factor of Akkermansia muciniphila (strain ATCC BAA-835 / DSM 22959 / JCM 33894 / BCRC 81048 / CCUG 64013 / CIP 107961 / Muc).